The following is a 295-amino-acid chain: GTPase Era (295 aa).

The Era-type G domain maps to 4–171 (KSGFVTIIGR…INLIVQYLPE (168 aa)). The segment at 12-19 (GRPNVGKS) is G1. Residue 12–19 (GRPNVGKS) participates in GTP binding. The interval 38-42 (QTTRN) is G2. The tract at residues 59 to 62 (DTPG) is G3. GTP contacts are provided by residues 59-63 (DTPGI) and 121-124 (NKID). The segment at 121-124 (NKID) is G4. Positions 150–152 (ISA) are G5. In terms of domain architecture, KH type-2 spans 194–280 (IREKILHYTD…YLELWVKVKE (87 aa)).

This sequence belongs to the TRAFAC class TrmE-Era-EngA-EngB-Septin-like GTPase superfamily. Era GTPase family. As to quaternary structure, monomer.

The protein resides in the cytoplasm. Its subcellular location is the cell membrane. Functionally, an essential GTPase that binds both GDP and GTP, with rapid nucleotide exchange. Plays a role in 16S rRNA processing and 30S ribosomal subunit biogenesis and possibly also in cell cycle regulation and energy metabolism. The protein is GTPase Era of Alkaliphilus oremlandii (strain OhILAs) (Clostridium oremlandii (strain OhILAs)).